The sequence spans 499 residues: MCELYSKRDTLGLRKKHIGPSCKVFFASDPIKIVRAQRQYMFDENGEQYLDCINNVAHVGHCHPGVVKAALKQMELLNTNSRFLHDNIVEYAKRLSATLPEKLSVCYFTNSGSEANDLALRLARQFRGHQDVITLDHAYHGHLSSLIEISPYKFQKGKDVKKEFVHVAPTPDTYRGKYREDHADSASAYADEVKKIIEDAHNSGRKIAAFIAESMQSCGGQIIPPAGYFQKVAEYVHGAGGVFIADEVQVGFGRVGKHFWSFQMYGEDFVPDIVTMGKPMGNGHPVACVVTTKEIAEAFSSSGMEYFNTYGGNPVSCAVGLAVLDIIENEDLQGNAKRVGNYLTELLKKQKAKHTLIGDIRGIGLFIGIDLVKDHLKRTPATAEAQHIIYKMKEKRVLLSADGPHRNVLKIKPPMCFTEEDAKFMVDQLDRILTVLEEAMGTKTESVTSENTPCKTKMLKEAHIELLRDSTTDSKENPSRKRNGMCTDTHSLLSKRLKT.

An N6-(pyridoxal phosphate)lysine modification is found at Lys-278. Positions 468–479 (RDSTTDSKENPS) are enriched in basic and acidic residues. The tract at residues 468–499 (RDSTTDSKENPSRKRNGMCTDTHSLLSKRLKT) is disordered.

This sequence belongs to the class-III pyridoxal-phosphate-dependent aminotransferase family. In terms of assembly, homotetramer. The cofactor is pyridoxal 5'-phosphate.

The protein localises to the mitochondrion. It catalyses the reaction phosphoethanolamine + H2O = acetaldehyde + NH4(+) + phosphate. In terms of biological role, catalyzes the pyridoxal-phosphate-dependent breakdown of phosphoethanolamine, converting it to ammonia, inorganic phosphate and acetaldehyde. This is Ethanolamine-phosphate phospho-lyase (ETNPPL) from Homo sapiens (Human).